The primary structure comprises 88 residues: Small ribosomal subunit protein uS17 (88 aa).

It belongs to the universal ribosomal protein uS17 family. In terms of assembly, part of the 30S ribosomal subunit.

One of the primary rRNA binding proteins, it binds specifically to the 5'-end of 16S ribosomal RNA. This is Small ribosomal subunit protein uS17 from Prochlorococcus marinus subsp. pastoris (strain CCMP1986 / NIES-2087 / MED4).